Here is a 332-residue protein sequence, read N- to C-terminus: MSAETPINVVGGGAWGTALANAAAGAGHPVTLWLRDAGAAAALQAQRENPRYLPGVPLHPAIRATGEAVDLAGARATLLVVPAQTVRGVLESLRGPLATAGPVILCAKGIERGSDSFMSAVAEQVLPSGTPVAVLSGPSFAIDVARGLPTAVTLAAADAGRAAALSALLSGPSFRLYHTDDVRGVEIGGAGKNVLAIACGIVAGRGLGESARAALIARAFAELMRFARPFGGRPETLMGLSGLGDLVLTASSPQSRNFAFGQRLGAGASPAEAAGGKLAEGAFTAAALAGLAAAKGIEMPVAAAVAAIVAGTASVDDVIAGLLARPLRGETD.

NADPH is bound by residues tryptophan 15, arginine 35, and lysine 108. Sn-glycerol 3-phosphate contacts are provided by lysine 108, glycine 137, and serine 139. Alanine 141 serves as a coordination point for NADPH. Residues lysine 192, aspartate 245, serine 255, arginine 256, and asparagine 257 each contribute to the sn-glycerol 3-phosphate site. Lysine 192 (proton acceptor) is an active-site residue. Arginine 256 is an NADPH binding site. Residues leucine 278 and glutamate 280 each contribute to the NADPH site.

Belongs to the NAD-dependent glycerol-3-phosphate dehydrogenase family.

The protein localises to the cytoplasm. It carries out the reaction sn-glycerol 3-phosphate + NAD(+) = dihydroxyacetone phosphate + NADH + H(+). It catalyses the reaction sn-glycerol 3-phosphate + NADP(+) = dihydroxyacetone phosphate + NADPH + H(+). It participates in membrane lipid metabolism; glycerophospholipid metabolism. Functionally, catalyzes the reduction of the glycolytic intermediate dihydroxyacetone phosphate (DHAP) to sn-glycerol 3-phosphate (G3P), the key precursor for phospholipid synthesis. This chain is Glycerol-3-phosphate dehydrogenase [NAD(P)+], found in Methylobacterium radiotolerans (strain ATCC 27329 / DSM 1819 / JCM 2831 / NBRC 15690 / NCIMB 10815 / 0-1).